The primary structure comprises 181 residues: MANAAHRFTEYRKTMALLNILHYPDKRLHKVAKPVDKVDDRIRKLVADMAETMYAAPGIGLAATQVDVHERVIVIDVSEDKNELRAFINPEIIWSSDGKQVYEEGCLSVPGIYDEVERPDRVRVRALNEQGETFELDCEGLLAVCIQHEMDHLMGRVFVEYLSPLKQSRIKTKMKKLERAM.

2 residues coordinate Fe cation: Cys106 and His148. Glu149 is an active-site residue. His152 lines the Fe cation pocket.

Belongs to the polypeptide deformylase family. Fe(2+) serves as cofactor.

The catalysed reaction is N-terminal N-formyl-L-methionyl-[peptide] + H2O = N-terminal L-methionyl-[peptide] + formate. Its function is as follows. Removes the formyl group from the N-terminal Met of newly synthesized proteins. Requires at least a dipeptide for an efficient rate of reaction. N-terminal L-methionine is a prerequisite for activity but the enzyme has broad specificity at other positions. The protein is Peptide deformylase 1 of Burkholderia multivorans (strain ATCC 17616 / 249).